The primary structure comprises 306 residues: Probable pinoresinol-lariciresinol reductase 3 (306 aa).

NADP(+) is bound by residues 14-20 (GATGRLG), R39, and K46. The active-site Proton acceptor is the K131. R135 contacts NADP(+).

Belongs to the NmrA-type oxidoreductase family. Isoflavone reductase subfamily. As to quaternary structure, dimer.

Functionally, probable reductase that might be involved in the reduction of lariciresinol into secoisolariciresinol. In most plant species, a single enzyme is able to reduce both pinoresinol and lariciresinol efficiently while in Arabidopsis, PRR1 and PRR2 show a strict substrate selectivity for pinoresinol. This chain is Probable pinoresinol-lariciresinol reductase 3 (PLR3), found in Arabidopsis thaliana (Mouse-ear cress).